The chain runs to 185 residues: Ribosome-recycling factor (185 aa).

Belongs to the RRF family.

It is found in the cytoplasm. Functionally, responsible for the release of ribosomes from messenger RNA at the termination of protein biosynthesis. May increase the efficiency of translation by recycling ribosomes from one round of translation to another. This is Ribosome-recycling factor from Streptococcus pneumoniae serotype 2 (strain D39 / NCTC 7466).